The sequence spans 84 residues: UPF0457 protein BCE33L2961 (84 aa).

The protein belongs to the UPF0457 family.

This is UPF0457 protein BCE33L2961 from Bacillus cereus (strain ZK / E33L).